The primary structure comprises 330 residues: Carbonic anhydrase 1 (330 aa).

A chloroplast transit peptide-like region spans residues 1 to 109 (MSTASAFAIN…AAARIDQITA (109 aa)).

This sequence belongs to the beta-class carbonic anhydrase family. Homohexamer.

It localises to the cytoplasm. The enzyme catalyses hydrogencarbonate + H(+) = CO2 + H2O. In terms of biological role, reversible hydration of carbon dioxide. This Flaveria linearis (Narrowleaf yellowtops) protein is Carbonic anhydrase 1.